The chain runs to 274 residues: Cytochrome c oxidase subunit 3 (274 aa).

7 consecutive transmembrane segments (helical) span residues 22-42 (PSPW…GGVM), 47-67 (FAAG…SMLL), 93-113 (GVVL…WAFF), 137-157 (PFEV…TITV), 170-190 (TILY…LQWV), 208-228 (FFVA…FLTV), and 248-268 (AAIW…VSVY).

Belongs to the cytochrome c oxidase subunit 3 family. As to quaternary structure, component of the cytochrome c oxidase (complex IV, CIV), a multisubunit enzyme composed of a catalytic core of 3 subunits and several supernumerary subunits. The complex exists as a monomer or a dimer and forms supercomplexes (SCs) in the inner mitochondrial membrane with ubiquinol-cytochrome c oxidoreductase (cytochrome b-c1 complex, complex III, CIII).

The protein localises to the mitochondrion inner membrane. The catalysed reaction is 4 Fe(II)-[cytochrome c] + O2 + 8 H(+)(in) = 4 Fe(III)-[cytochrome c] + 2 H2O + 4 H(+)(out). Its function is as follows. Component of the cytochrome c oxidase, the last enzyme in the mitochondrial electron transport chain which drives oxidative phosphorylation. The respiratory chain contains 3 multisubunit complexes succinate dehydrogenase (complex II, CII), ubiquinol-cytochrome c oxidoreductase (cytochrome b-c1 complex, complex III, CIII) and cytochrome c oxidase (complex IV, CIV), that cooperate to transfer electrons derived from NADH and succinate to molecular oxygen, creating an electrochemical gradient over the inner membrane that drives transmembrane transport and the ATP synthase. Cytochrome c oxidase is the component of the respiratory chain that catalyzes the reduction of oxygen to water. Electrons originating from reduced cytochrome c in the intermembrane space (IMS) are transferred via the dinuclear copper A center (CU(A)) of subunit 2 and heme A of subunit 1 to the active site in subunit 1, a binuclear center (BNC) formed by heme A3 and copper B (CU(B)). The BNC reduces molecular oxygen to 2 water molecules using 4 electrons from cytochrome c in the IMS and 4 protons from the mitochondrial matrix. This is Cytochrome c oxidase subunit 3 (COX3) from Allomyces macrogynus.